The following is a 276-amino-acid chain: Extracellular metalloprotease 1 (276 aa).

Positions 1–18 (MRVSVPVLALAFGSLAAA) are cleaved as a signal peptide. Position 191 (His-191) interacts with Zn(2+). Glu-192 is a catalytic residue. His-195 lines the Zn(2+) pocket. Residues 211-233 (GDYVSDTPPQRSPSSGCPVGRDS) form a disordered region. Residues Cys-227 and Cys-253 are joined by a disulfide bond.

The protein belongs to the peptidase M43B family.

It localises to the secreted. In terms of biological role, secreted metalloproteinase that allows assimilation of proteinaceous substrates. Pays a pivotal role as a pathogenicity determinant during infections and contributes to the ability of the pathogen to persist within the mammalian host. Digests an immunodominant cell surface antigen (SOWgp) and prevents host recognition of endospores during the phase of development when these fungal cells are most vulnerable to phagocytic cell defenses. The sequence is that of Extracellular metalloprotease 1 (MEP1) from Coccidioides posadasii (strain C735) (Valley fever fungus).